The chain runs to 230 residues: Claudin-2 (230 aa).

Residues 1 to 7 (MASLGLQ) are Cytoplasmic-facing. The chain crosses the membrane as a helical span at residues 8–28 (LVGYILGLLGLLGTLVAMLLP). At 29–81 (SWKTSSYVGASIVTAVGFSKGLWMECATHSTGITQCDIYSTLLGLPADIQAAQ) the chain is on the extracellular side. An intrachain disulfide couples cysteine 54 to cysteine 64. A helical transmembrane segment spans residues 82 to 102 (AMMVTSSAISSLACIISVVGM). Topologically, residues 103-116 (RCTVFCQESRAKDR) are cytoplasmic. A helical membrane pass occupies residues 117-137 (VAVAGGVFFILGGLLGFIPVA). Topologically, residues 138–162 (WNLHGILRDFYSPLVPDSMKFEIGE) are extracellular. Residues 163-183 (ALYLGIISSLFSLIAGIILCF) traverse the membrane as a helical segment. At 184–230 (SCSSQRNRSNYYDAYQAQPLATRSSPRPGQPPKVKSEFNSYSLTGYV) the chain is on the cytoplasmic side. The tract at residues 205–230 (TRSSPRPGQPPKVKSEFNSYSLTGYV) is disordered. Residue lysine 218 forms a Glycyl lysine isopeptide (Lys-Gly) (interchain with G-Cter in SUMO) linkage. Residues serine 219 and serine 223 each carry the phosphoserine modification. Residues 220–230 (EFNSYSLTGYV) are compositionally biased toward polar residues. The segment at 229–230 (YV) is interactions with TJP1, TJP2 and TJP3.

This sequence belongs to the claudin family. As to quaternary structure, can form homo- and heteropolymers with other claudins to mediate paracellular barrier and channel functions of tight junctions in response to physiological stimuli. Homopolymers interact with CLDN3, but not CLDN1, homopolymers. Directly interacts with TJP1/ZO-1, TJP2/ZO-2 and TJP3/ZO-3. Post-translationally, the disulfide bond is necessary for pore formation, but is not required for correct protein trafficking.

The protein localises to the cell junction. It localises to the tight junction. It is found in the cell membrane. It catalyses the reaction Na(+)(in) = Na(+)(out). The catalysed reaction is K(+)(in) = K(+)(out). It carries out the reaction Rb(+)(in) = Rb(+)(out). The enzyme catalyses Li(+)(in) = Li(+)(out). It catalyses the reaction Cs(+)(in) = Cs(+)(out). The catalysed reaction is Ca(2+)(in) = Ca(2+)(out). It carries out the reaction methylamine(out) = methylamine(in). The enzyme catalyses choline(out) = choline(in). It catalyses the reaction H2O(in) = H2O(out). Functionally, forms paracellular channels: polymerizes in tight junction strands with cation- and water-selective channels through the strands, conveying epithelial permeability in a process known as paracellular tight junction permeability. In intestinal epithelium, allows for sodium and water fluxes from the peritoneal side to the lumen of the intestine to regulate nutrient absorption and clear enteric pathogens as part of mucosal immune response. In kidney, allows passive sodium and calcium reabsorption across proximal tubules from the lumen back to the bloodstream. In the hepatobiliary tract, allows paracellular water and cation fluxes in the hepatic perivenous areas and biliary epithelium to generate bile flow and maintain osmotic gradients. This is Claudin-2 from Homo sapiens (Human).